Here is a 342-residue protein sequence, read N- to C-terminus: MPNDSVLSLFFFVTLFTCLLSATSHDDHIFLPSQLHDDDSVSCTATDPSLNYKPVIGILTHPGDGASGRLSNATGVSYIAASYVKFVESGGARVIPLIYNESPENLNKKLDLVNGVLFTGGWAVSGPYLDTLGNIFKKALERNDAGDHFPVIAFNLGGNLVIRIVSEQTDILEPFTASSLPSSLVLWNEANAKGSLFQRFPSDLLTQLKTDCLVLHNHRYAISPRKLQYNTKLSDFFEILATSGDRDGKTFVSTARGRKYPVTVNLWQPEKNAFEWATSLKAPHTEDAIRVTQSTANFFISEARKSTNTPDAQKVRDSLIYNYKPTFGGTAGKGYDQVYLFE.

The first 21 residues, 1–21, serve as a signal peptide directing secretion; sequence MPNDSVLSLFFFVTLFTCLLS. A Gamma-glutamyl hydrolase domain is found at 45–342; sequence ATDPSLNYKP…KGYDQVYLFE (298 aa). Residue asparagine 72 is glycosylated (N-linked (GlcNAc...) asparagine).

The protein belongs to the peptidase C26 family. In terms of tissue distribution, expressed only in young (1-15 day old) leaf, stem and root tissue.

The protein localises to the secreted. It localises to the extracellular space. The protein resides in the cell wall. It carries out the reaction (6S)-5,6,7,8-tetrahydrofolyl-(gamma-L-Glu)(n) + (n-1) H2O = (6S)-5,6,7,8-tetrahydrofolate + (n-1) L-glutamate. This is Gamma-glutamyl hydrolase from Glycine max (Soybean).